We begin with the raw amino-acid sequence, 118 residues long: MASQSQGIQQLLQAEKRAKDKLEEAKKRKNKRLRQAKEEATADIDQYRLKREADFRRIQTSVMGSQGNLAVKIEEQTVEKIQFYSSSYNKYKEGVLKELLDLAYNIKPELHTNYKYKI.

The stretch at 3-54 (SQSQGIQQLLQAEKRAKDKLEEAKKRKNKRLRQAKEEATADIDQYRLKREAD) forms a coiled coil. A disordered region spans residues 19 to 39 (KDKLEEAKKRKNKRLRQAKEE).

This sequence belongs to the V-ATPase G subunit family. As to quaternary structure, V-ATPase is a heteromultimeric enzyme made up of two complexes: the ATP-hydrolytic V1 complex and the proton translocation V0 complex. The V1 complex consists of three catalytic AB heterodimers that form a heterohexamer, three peripheral stalks each consisting of EG heterodimers, one central rotor including subunits D and F, and the regulatory subunits C and H. The proton translocation complex V0 consists of the proton transport subunit a, a ring of proteolipid subunits c9c'', rotary subunit d, subunits e and f, and two accessory subunits.

Subunit of the V1 complex of vacuolar(H+)-ATPase (V-ATPase), a multisubunit enzyme composed of a peripheral complex (V1) that hydrolyzes ATP and a membrane integral complex (V0) that translocates protons. V-ATPase is responsible for acidifying and maintaining the pH of intracellular compartments and in some cell types, is targeted to the plasma membrane, where it is responsible for acidifying the extracellular environment. The protein is V-type proton ATPase subunit G 3 (atp6v1g3) of Xenopus laevis (African clawed frog).